The following is an 84-amino-acid chain: Large ribosomal subunit protein bL31B (84 aa).

This sequence belongs to the bacterial ribosomal protein bL31 family. Type B subfamily. In terms of assembly, part of the 50S ribosomal subunit.

The sequence is that of Large ribosomal subunit protein bL31B from Acinetobacter baumannii (strain AB307-0294).